Here is a 338-residue protein sequence, read N- to C-terminus: Dihydroorotate dehydrogenase (quinone) (338 aa).

Residues 59 to 63 (AGLDK) and Thr83 contribute to the FMN site. Residue Lys63 participates in substrate binding. 108-112 (NRMGF) lines the substrate pocket. Residues Asn136 and Asn169 each contribute to the FMN site. Position 169 (Asn169) interacts with substrate. The active-site Nucleophile is Ser172. A substrate-binding site is contributed by Asn174. FMN-binding residues include Lys214 and Thr242. Substrate is bound at residue 243 to 244 (NT). Residues Gly265, Gly294, and 315–316 (YS) contribute to the FMN site.

It belongs to the dihydroorotate dehydrogenase family. Type 2 subfamily. As to quaternary structure, monomer. FMN is required as a cofactor.

It is found in the cell membrane. It carries out the reaction (S)-dihydroorotate + a quinone = orotate + a quinol. The protein operates within pyrimidine metabolism; UMP biosynthesis via de novo pathway; orotate from (S)-dihydroorotate (quinone route): step 1/1. In terms of biological role, catalyzes the conversion of dihydroorotate to orotate with quinone as electron acceptor. The chain is Dihydroorotate dehydrogenase (quinone) from Azoarcus sp. (strain BH72).